A 379-amino-acid polypeptide reads, in one-letter code: Oxysterol-binding protein-related protein 4C (379 aa).

It belongs to the OSBP family. As to expression, expressed in flowers.

Functionally, may be involved in the transport of sterols. The polypeptide is Oxysterol-binding protein-related protein 4C (ORP4C) (Arabidopsis thaliana (Mouse-ear cress)).